We begin with the raw amino-acid sequence, 211 residues long: Mitotic spindle assembly checkpoint protein MAD2B (211 aa).

Positions 13–203 (QVVADVLSEF…SDILKMQLYV (191 aa)) constitute an HORMA domain. Residues 21–155 (EFLEVAVHLI…FTVLVHTREA (135 aa)) are mediates interaction with REV1 and REV3L and homodimerization.

As to quaternary structure, homooligomer. Heterodimer with REV3L. This dimer forms the minimal DNA polymerase zeta complex (Pol-zeta2), with REV3L bearing DNA polymerase catalytic activity, although its activity is very low in this context. Component of the tetrameric Pol-zeta complex (Pol-zeta4), which consists of REV3L, MAD2L2, POLD2 and POLD3; Pol-zeta4 is the fully active form of DNA polymerase zeta. Component of the shieldin complex, consisting of SHLD1, SHLD2, SHLD3 and MAD2L2/REV7. Within the complex, SHLD2 forms a scaffold which interacts with a SHLD3-MAD2L2 subcomplex via its N-terminus, and with SHLD1 via its C-terminus. Interacts with REV1. Interacts with ADAM9. Interacts with CHAMP1. Interacts with FZR1 (in complex with the anaphase promoting complex APC). May interact with CDC20. Interacts with RAN. Interacts with ELK1; the interaction is direct and recruits MAD2L2 to ELK1-specific promoters. May interact with the JNK kinases MAPK8 and/or MAPK9 to stimulate ELK1 phosphorylation and transcriptional activity upon DNA damage. Interacts with TCF7L2; prevents its binding to promoters and negatively modulates its transcriptional activity. Interacts with YY1AP1. Interacts with PRCC; the interaction is direct. Interacts with POGZ. Interacts with ASTE1.

Its subcellular location is the nucleus. It is found in the cytoplasm. The protein localises to the cytoskeleton. The protein resides in the spindle. Adapter protein able to interact with different proteins and involved in different biological processes. Mediates the interaction between the error-prone DNA polymerase zeta catalytic subunit REV3L and the inserter polymerase REV1, thereby mediating the second polymerase switching in translesion DNA synthesis. Translesion DNA synthesis releases the replication blockade of replicative polymerases, stalled in presence of DNA lesions. Component of the shieldin complex, which plays an important role in repair of DNA double-stranded breaks (DSBs). During G1 and S phase of the cell cycle, the complex functions downstream of TP53BP1 to promote non-homologous end joining (NHEJ) and suppress DNA end resection. Mediates various NHEJ-dependent processes including immunoglobulin class-switch recombination, and fusion of unprotected telomeres. May also regulate another aspect of cellular response to DNA damage through regulation of the JNK-mediated phosphorylation and activation of the transcriptional activator ELK1. Inhibits the FZR1- and probably CDC20-mediated activation of the anaphase promoting complex APC thereby regulating progression through the cell cycle. Regulates TCF7L2-mediated gene transcription and may play a role in epithelial-mesenchymal transdifferentiation. This Rattus norvegicus (Rat) protein is Mitotic spindle assembly checkpoint protein MAD2B (Mad2l2).